A 509-amino-acid chain; its full sequence is DAP3-binding cell death enhancer 1 (509 aa).

The transit peptide at 1–23 (MWRLTGILGRALPRLLGPGFRGI) directs the protein to the mitochondrion. Disordered stretches follow at residues 19–60 (GFRG…RNRD) and 143–185 (VLPS…PGLL). Positions 24 to 101 (TPKPTSSDGP…AVLALHLARQ (78 aa)) are cleaved as a propeptide — extended MTS. The span at 26-40 (KPTSSDGPQTTSTTL) shows a compositional bias: polar residues. 2 stretches are compositionally biased toward basic and acidic residues: residues 46 to 60 (NFDR…RNRD) and 156 to 168 (GLRE…EEPA). TPR repeat units lie at residues 213–245 (AGPP…QLSV), 246–278 (AIAF…RGYS), 279–313 (KAQY…VQGH), 314–351 (SLAQ…DSGL), 352–385 (TEAQ…SNGD), 386–423 (SQSR…GNEP), and 470–498 (ASST…AMPS). The SIFI-degron signature appears at 307 to 326 (LAAVQGHSLAQYRYARCLLQ).

The protein belongs to the DELE1 family. In terms of assembly, interacts with DAP3. Interacts (via TPR repeats) with EIF2AK1/HRI; activating the protein kinase activity of EIF2AK1/HRI, thereby promoting the integrated stress response (ISR). As to quaternary structure, homooctamer; oligomerization is required to activate EIF2AK1/HRI. Interacts (via TPR repeats) with EIF2AK1/HRI; activating the protein kinase activity of EIF2AK1/HRI, thereby promoting the integrated stress response (ISR). Post-translationally, unstable protein in absence of stress: imported in the mitochondrial matrix following processing by the mitochondrial-processing peptidase (MPP), where it is degraded by LONP1. Stabilized in response to iron deficiency: iron deficiency impairs mitochondrial import, promoting localization at the mitochondrial surface and stabilization. Cleaved by OMA1 in response to mitochondrial stress, generating the DAP3-binding cell death enhancer 1 short form (DELE1(S) or S-DELE1) that accumulates in the cytosol and activates the protein kinase activity of EIF2AK1/HRI. Protein cleavage by OMA1 can take place at different positions, and apparently does not require a specific sequence motif. In terms of processing, ubiquitinated and degraded by the SIFI complex once the mitochondrial stress has been resolved, thereby providing stress response silencing. Within the SIFI complex, UBR4 initiates ubiquitin chain that are further elongated or branched by KCMF1.

It localises to the mitochondrion. Its subcellular location is the mitochondrion outer membrane. It is found in the mitochondrion inner membrane. The protein resides in the cytoplasm. The protein localises to the cytosol. Its function is as follows. Protein kinase activator that acts as a key activator of the integrated stress response (ISR) following various stresses, such as iron deficiency, mitochondrial stress or mitochondrial DNA breaks. Detects impaired protein import and processing in mitochondria, activating the ISR. May also required for the induction of death receptor-mediated apoptosis through the regulation of caspase activation. Functionally, protein kinase activator that activates the ISR in response to iron deficiency: iron deficiency impairs mitochondrial import, promoting DELE1 localization at the mitochondrial surface, where it binds and activates EIF2AK1/HRI to trigger the ISR. Protein kinase activator generated by protein cleavage in response to mitochondrial stress, which accumulates in the cytosol and specifically binds to and activates the protein kinase activity of EIF2AK1/HRI. It thereby activates the integrated stress response (ISR): EIF2AK1/HRI activation promotes eIF-2-alpha (EIF2S1) phosphorylation, leading to a decrease in global protein synthesis and the induction of selected genes, including the transcription factor ATF4, the master transcriptional regulator of the ISR. Also acts as an activator of PRKN-independent mitophagy: activates the protein kinase activity of EIF2AK1/HRI in response to mitochondrial damage, promoting eIF-2-alpha (EIF2S1) phosphorylation, leading to mitochondrial localization of EIF2S1 followed by induction of mitophagy. The polypeptide is DAP3-binding cell death enhancer 1 (Rattus norvegicus (Rat)).